Consider the following 548-residue polypeptide: MPAKEIAFHQPAREAILRGVQTLAEAVAVTLGPKGRNVVIEKSYGAPTITKDGVTVAKEIELESKFENMGAQMVKEVASQTSDKAGDGTTTATVLARSIYEEGLKLVAAGHNPMDLKRGIDRAVEVVVAHLKSLSTPTKGKDDIAQVGTISANGDTTIGNIIAEAMEKVGKEGVITVEEAKGLETTLDVVEGMQFDRGYSSPYFVTNPDRMEAALEDPYVLVTEKKITAMADLVPVLEQVARSGKPLLIIAEEVEGEALATLVVNKLRGTLHVCAVKAPGFGDRRKEMLKDIATLTGGTVVAEELGIKLEQLGLKDLGRAKRITVDKDNTTIVDGEGKKADIEARIKVIRGQIEESTSEYDREKLQERLAKLVGGVAVINVGAATETEMKEKKARVEDALHATRAAVEEGIVPGGGVAYLRSLADLQKLDVGQGDQRFGVQIVVKALEWPARRIAENAGWDGPVVVNKILEGKGAFGFNAATDTFEDLTKAGVIDPTKVSRTALQNAASVASLLLTTEAMVADKPKKKAAAGGGAGAGMGGGMDDMDY.

Residues Thr30–Pro33, Lys51, Asp87–Thr91, Gly415, Asn479–Ala481, and Asp495 contribute to the ATP site.

It belongs to the chaperonin (HSP60) family. In terms of assembly, forms a cylinder of 14 subunits composed of two heptameric rings stacked back-to-back. Interacts with the co-chaperonin GroES.

It localises to the cytoplasm. The enzyme catalyses ATP + H2O + a folded polypeptide = ADP + phosphate + an unfolded polypeptide.. Together with its co-chaperonin GroES, plays an essential role in assisting protein folding. The GroEL-GroES system forms a nano-cage that allows encapsulation of the non-native substrate proteins and provides a physical environment optimized to promote and accelerate protein folding. The polypeptide is Chaperonin GroEL 1 (Anaeromyxobacter dehalogenans (strain 2CP-C)).